Reading from the N-terminus, the 180-residue chain is MSILPVIFLPIFFYSPFVQTFNVPECIDKGQYFASFMELENEPVILPCPQINTLSSGYNILDILWEKRGADNDRIIQIDNGSNMLILNPTQSDSGIYIYITTNETYCDMMSLNLTIVSVSESNIDLISYPQIVNERSTGKMVCPNINAFISSNVNTELYGADIDALEIRDLNNGHLELLP.

Residues 1–20 form the signal peptide; that stretch reads MSILPVIFLPIFFYSPFVQT. 3 N-linked (GlcNAc...) asparagine; by host glycosylation sites follow: asparagine 80, asparagine 103, and asparagine 113.

Belongs to the interleukin-1 receptor family. In terms of assembly, interacts with mouse Il1b.

The protein localises to the secreted. In terms of biological role, may reduce the host inflammatory response by interacting with inteleukin-1 beta (Il1b) and thus decreasing the association between IL1B and its cellular receptor. The sequence is that of Interleukin-1-binding protein (OPG201) from Monkeypox virus.